The chain runs to 123 residues: CD59 glycoprotein (123 aa).

Residues 1–25 (MGSKGGFILLWLLSILAVLCHLGHS) form the signal peptide. The 78-residue stretch at 26–103 (LQCYNCINPA…LCNKSDATIS (78 aa)) folds into the UPAR/Ly6 domain. 5 disulfide bridges follow: cysteine 28–cysteine 51, cysteine 31–cysteine 38, cysteine 44–cysteine 65, cysteine 71–cysteine 89, and cysteine 90–cysteine 95. Residue asparagine 43 is glycosylated (N-linked (GlcNAc...) asparagine). Serine 98 carries GPI-anchor amidated serine lipidation. Residues 99 to 123 (DATISSGKTALLVILLLVATWHFCL) constitute a propeptide, removed in mature form.

Interacts with T-cell surface antigen CD2. Post-translationally, N- and O-glycosylated. Expressed in all tissues tested (lung, testis liver, kidney, spleen, heart and skeletal muscle). Highest levels in lung and spleen, lowest levels in liver and skeletal muscle.

It is found in the cell membrane. The protein localises to the secreted. Functionally, potent inhibitor of the complement membrane attack complex (MAC) action, which protects self-cells from damage during complement activation. Acts by binding to the beta-haipins of C8 (C8A and C8B) components of the assembling MAC, forming an intermolecular beta-sheet that prevents incorporation of the multiple copies of C9 required for complete formation of the osmolytic pore. This Sus scrofa (Pig) protein is CD59 glycoprotein.